The sequence spans 272 residues: Endoplasmic reticulum resident protein 27 (272 aa).

An N-terminal signal peptide occupies residues 1 to 25 (MEAMPSRCLFLLFLSTCKLSPEVVA). The region spanning 38-151 (EPMRLTDVQA…LVTEYNAITA (114 aa)) is the Thioredoxin domain. N-linked (GlcNAc...) asparagine glycosylation occurs at N99. Residues 229 to 232 (DKWD) form a PDIA3-binding site region. A Prevents secretion from ER motif is present at residues 269–272 (KVEL).

It belongs to the protein disulfide isomerase family. Interacts with PDIA3.

The protein resides in the endoplasmic reticulum lumen. Functionally, specifically binds unfolded proteins and may recruit protein disulfide isomerase PDIA3 to unfolded substrates. Binds protein substrates via a hydrophobic pocket in the C-terminal domain. May play a role in the unfolded stress response. In Bos taurus (Bovine), this protein is Endoplasmic reticulum resident protein 27 (ERP27).